The sequence spans 221 residues: N-(5'-phosphoribosyl)anthranilate isomerase (221 aa).

It belongs to the TrpF family.

The enzyme catalyses N-(5-phospho-beta-D-ribosyl)anthranilate = 1-(2-carboxyphenylamino)-1-deoxy-D-ribulose 5-phosphate. It functions in the pathway amino-acid biosynthesis; L-tryptophan biosynthesis; L-tryptophan from chorismate: step 3/5. This Geobacillus thermodenitrificans (strain NG80-2) protein is N-(5'-phosphoribosyl)anthranilate isomerase.